The primary structure comprises 217 residues: uncharacterized protein (217 aa).

The interval 1–32 (MTLKKHRGKMSEKSNVNKKFTNSTQNNSNWSN) is disordered. A compositionally biased stretch (low complexity) spans 22–32 (NSTQNNSNWSN).

This is an uncharacterized protein from Acidianus filamentous virus 2 (isolate Italy/Pozzuoli) (AFV-2).